The following is a 499-amino-acid chain: Terpentedienyl-diphosphate synthase (499 aa).

Positions 284 and 286 each coordinate Mg(2+). Residues 284–287 (DGDD) carry the DXDD motif motif.

This sequence belongs to the terpene synthase family. In terms of assembly, monomer. Mg(2+) is required as a cofactor.

It carries out the reaction (2E,6E,10E)-geranylgeranyl diphosphate = terpentedienyl diphosphate. The protein operates within antibiotic biosynthesis. Its function is as follows. Involved in the production of the isoprenoid antibiotic terpentecin. Converts geranylgeranyl diphosphate (GGDP) into terpentedienol diphosphate (TDP) by a protonation-initiated cyclization. This chain is Terpentedienyl-diphosphate synthase (cyc1), found in Kitasatospora griseola (Streptomyces griseolosporeus).